We begin with the raw amino-acid sequence, 358 residues long: SPbeta prophage-derived probable integrase/recombinase YopP (358 aa).

One can recognise a Core-binding (CB) domain in the interval 23–114 (NKDIRSSSGN…SLKMLYTYLE (92 aa)). One can recognise a Tyr recombinase domain in the interval 137–319 (KNWDKTTQTE…NIANSAGVTM (183 aa)). Residues R178, K206, H268, and H295 contribute to the active site. Y304 acts as the O-(3'-phospho-DNA)-tyrosine intermediate in catalysis.

It belongs to the 'phage' integrase family.

Functionally, probable recombinase that does not seem to have a role in chromosome dimer resolution per se but rather may have some facilitative role during chromosome partitioning in general. This is SPbeta prophage-derived probable integrase/recombinase YopP (yopP) from Bacillus subtilis (strain 168).